The primary structure comprises 315 residues: WD repeat domain-containing protein 83 (315 aa).

WD repeat units lie at residues 23–62 (CGQGAVRAVRFNVDGNYCLTCGSDKTLKLWNPLRGTLLRT), 65–104 (GHGYEVLDAAGSFDNSHLCSGGGDKTVVLWDVATGQVVRK), 107–146 (GHAGKVNTVQFNEEATVILSGSIDSSVRCWDCRSRKPEPV), 151–188 (EARDGISSVKVSDHEILAGSVDGRVRRYDLRMGQVTSD), 190–228 (VGSPITCTCFSRDGQCTLISSLDSTLRLLDKDTGELLGE), 231–272 (GHKN…LALA), and 275–313 (VGSNVVQSLAYHPADPCLLTAMGGSIQYWREETYEAEGG).

The protein belongs to the WD repeat MORG1 family. Interacts with EGLN3/PHD3. Interacts with ERK signaling proteins MAP2K1/MEK1, MAP2K2/MEK2, LAMTOR3, ARAF/Raf-1, MAPK1/ERK2 and MAPK3/ERK1. Identified in the spliceosome C complex. Interacts with PARD6B and CRB3. Interacts strongly with GTP-bound RRAGA but not with inactive GDP-bound. Interacts with p62/SQSTM1. In terms of tissue distribution, highly expressed in testis and brain. Expressed at intermediate level in heart, liver and kidney. Weakly expressed in spleen and lung and absent in muscle.

Its subcellular location is the cytoplasm. It localises to the lysosome. The protein localises to the nucleus. Functionally, molecular scaffold protein for various multimeric protein complexes. Acts as a module in the assembly of a multicomponent scaffold for the ERK pathway, linking ERK responses to specific agonists. At low concentrations it enhances ERK activation, whereas high concentrations lead to the inhibition of ERK activation. Also involved in response to hypoxia by acting as a negative regulator of HIF1A/HIF-1-alpha via its interaction with EGLN3/PHD3. May promote degradation of HIF1A. May act by recruiting signaling complexes to a specific upstream activator. May also be involved in pre-mRNA splicing. Participates in tight junction development by regulating apico-basal polarity, a key step in tissue development and organization. Mechanistically, regulates the translocation of PAR6-aPKC from the cytoplasm to the apical surface by acting as an adapter between PARD6B AND CRB3. Also acts as a negative regulator of mTORC1 under nutrient-rich conditions by binding to the active Rag GTPases to inhibit mTORC1 localization to the lysosome and phosphorylation of downstream targets. This facilitates constitutive basal autophagy during nutrient availability. This is WD repeat domain-containing protein 83 (Wdr83) from Rattus norvegicus (Rat).